The chain runs to 1098 residues: Transcription elongation regulator 1 (1098 aa).

Residues 1–15 (MAERGGDGGESERFN) are compositionally biased toward basic and acidic residues. The segment at 1-105 (MAERGGDGGE…RPPFMPPPMS (105 aa)) is disordered. Ser-11 carries the phosphoserine modification. At Arg-20 the chain carries Omega-N-methylarginine. An asymmetric dimethylarginine mark is found at Arg-28, Arg-30, Arg-41, and Arg-48. The segment covering 32-105 (PAPPPNAVMR…RPPFMPPPMS (74 aa)) has biased composition (pro residues). Residues 131–164 (PPTEEIWVENKTPDGKVYYYNARTRESAWTKPDG) form the WW 1 domain. Residues 184-244 (QAQAQAQAQA…AQAQAQAQVQ (61 aa)) adopt a coiled-coil conformation. Over residues 259–333 (STPTTSSPAP…PTATPVQTVP (75 aa)) the composition is skewed to low complexity. A disordered region spans residues 259–348 (STPTTSSPAP…TLPPAVPHSV (90 aa)). Residues 334–344 (QPHPQTLPPAV) are compositionally biased toward pro residues. The 34-residue stretch at 429-462 (ATAVSEWTEYKTADGKTYYYNNRTLESTWEKPQE) folds into the WW 2 domain. Basic and acidic residues-rich tracts occupy residues 469–481 (LEEK…KEPS) and 496–506 (EEPIKEIKEEP). A disordered region spans residues 469–526 (LEEKIKEPIKEPSEEPLPMETEEEDPKEEPIKEIKEEPKEEEMTEEEKAAQKAKPVAT). Glycyl lysine isopeptide (Lys-Gly) (interchain with G-Cter in SUMO2) cross-links involve residues Lys-503 and Lys-507. The WW 3 domain maps to 528–561 (PIPGTPWCVVWTGDERVFFYNPTTRLSMWDRPDD). A coiled-coil region spans residues 606 to 655 (AIKEEQELMEEINEDEPVKAKKRKRDDNKDIDSEKEAAMEAEIKAARERA). Lys-608 participates in a covalent cross-link: Glycyl lysine isopeptide (Lys-Gly) (interchain with G-Cter in SUMO2). Residues 615 to 640 (EEINEDEPVKAKKRKRDDNKDIDSEK) form a disordered region. Positions 626–630 (KKRKR) match the Nuclear localization signal motif. The span at 630-640 (RDDNKDIDSEK) shows a compositional bias: basic and acidic residues. Phosphoserine is present on Ser-638. 3 FF domains span residues 659-712 (LEAR…YVKT), 725-779 (IMQA…FVAA), and 791-846 (RGEK…YIEK). Residue Ser-834 is modified to Phosphoserine. Residues 844–906 (IEKIAKNLDS…EEAIQNFKAL (63 aa)) adopt a coiled-coil conformation. The disordered stretch occupies residues 870-895 (REREREVQKARSEQTKEIDREREQHK). FF domains follow at residues 896–952 (REEA…HIEA), 954–1010 (TKKK…YIRD), and 1012–1077 (YITA…YVDD). Residue Ser-933 is modified to Phosphoserine. The disordered stretch occupies residues 1076 to 1098 (DDLDRRGPPPPPTASEPTRRSTK).

Binds formin. Interacts (via the second WW domain) with TREX1 (via proline-rich region). Binds RNA polymerase II, HD and SF1. In terms of tissue distribution, detected in brain neurons.

The protein localises to the nucleus. Functionally, transcription factor that binds RNA polymerase II and inhibits the elongation of transcripts from target promoters. Regulates transcription elongation in a TATA box-dependent manner. Necessary for TAT-dependent activation of the human immunodeficiency virus type 1 (HIV-1) promoter. The chain is Transcription elongation regulator 1 (TCERG1) from Homo sapiens (Human).